A 1097-amino-acid polypeptide reads, in one-letter code: DNA polymerase catalytic subunit (1097 aa).

The disordered stretch occupies residues 1069–1097 (RGGDDSDGGDSEKENMDTERSSSHEAMET). The span at 1078–1097 (DSEKENMDTERSSSHEAMET) shows a compositional bias: basic and acidic residues.

It belongs to the DNA polymerase type-B family.

The protein localises to the host nucleus. The catalysed reaction is DNA(n) + a 2'-deoxyribonucleoside 5'-triphosphate = DNA(n+1) + diphosphate. The sequence is that of DNA polymerase catalytic subunit (UL54) from Murid herpesvirus 1 (strain Smith) (MuHV-1).